The sequence spans 401 residues: 2,3,4,5-tetrahydropyridine-2,6-dicarboxylate N-succinyltransferase (401 aa).

E269 functions as the Acyl-anhydride intermediate in the catalytic mechanism. Succinyl-CoA-binding positions include R271, G286, S289, A312, D327–A328, G335, and K364.

Belongs to the type 2 tetrahydrodipicolinate N-succinyltransferase family. Homotrimer.

The protein localises to the cytoplasm. It carries out the reaction (S)-2,3,4,5-tetrahydrodipicolinate + succinyl-CoA + H2O = (S)-2-succinylamino-6-oxoheptanedioate + CoA. It functions in the pathway amino-acid biosynthesis; L-lysine biosynthesis via DAP pathway; LL-2,6-diaminopimelate from (S)-tetrahydrodipicolinate (succinylase route): step 1/3. In terms of biological role, catalyzes the conversion of the cyclic tetrahydrodipicolinate (THDP) into the acyclic N-succinyl-L-2-amino-6-oxopimelate using succinyl-CoA. The polypeptide is 2,3,4,5-tetrahydropyridine-2,6-dicarboxylate N-succinyltransferase (Helicobacter pylori (strain ATCC 700392 / 26695) (Campylobacter pylori)).